The chain runs to 383 residues: Putative glutamate--cysteine ligase 2-2 (383 aa).

Residues 35–56 (RGDRDGAGGPPGGADPDGDLDG) are disordered.

This sequence belongs to the glutamate--cysteine ligase type 2 family. YbdK subfamily.

It carries out the reaction L-cysteine + L-glutamate + ATP = gamma-L-glutamyl-L-cysteine + ADP + phosphate + H(+). ATP-dependent carboxylate-amine ligase which exhibits weak glutamate--cysteine ligase activity. The polypeptide is Putative glutamate--cysteine ligase 2-2 (Frankia alni (strain DSM 45986 / CECT 9034 / ACN14a)).